A 248-amino-acid chain; its full sequence is Opiorphin prepropeptide (248 aa).

The first 21 residues, 1-21, serve as a signal peptide directing secretion; sequence MKLTFFLGLLALISCFTPSES. Pyrrolidone carboxylic acid is present on Q22. Positions 150–198 are disordered; the sequence is DTTITTNPPTTATATTSTSTKPTMTISSSTVPISSTPEPATSISAATPA. The N-linked (GlcNAc...) asparagine glycan is linked to N218.

The protein belongs to the PROL1/PROL3 family. Abundantly expressed in lacrimal gland where it found in the secretory endpieces. Also expressed at modest levels in the submandibular gland.

It localises to the secreted. In terms of biological role, opiorphin is an endogenous inhibitor of neprilysin and aminopeptidase N. Inhibits the breakdown of substance P, Mca-BK2 and Met-enkephalin by neprilysin in vitro with IC(50) values of 29 uM, 33 uM and 33 uM respectively. Inhibits the breakdown of Ala-pNA by aminopeptidase N in vitro with an IC(50) of 65 uM. Has a potent analgesic effect when administered to rats by intravenous injection. This is Opiorphin prepropeptide from Homo sapiens (Human).